Here is a 775-residue protein sequence, read N- to C-terminus: Glutamine--tRNA ligase (775 aa).

Residue alanine 2 is modified to N-acetylalanine. At serine 70 the chain carries Phosphoserine. The 'HIGH' region motif lies at 270 to 280 (PEPNGILHIGH). ATP is bound by residues 271-273 (EPN) and 277-283 (HIGHAKA). Aspartate 303 is an L-glutamine binding site. N6-acetyllysine is present on lysine 309. Position 438 (tyrosine 438) interacts with L-glutamine. ATP contacts are provided by residues threonine 457, 486–487 (RL), and 494–496 (VSK). Residues 493–497 (VVSKR) carry the 'KMSKS' region motif. Residue serine 495 is modified to Phosphoserine.

It belongs to the class-I aminoacyl-tRNA synthetase family. As to quaternary structure, monomer. Part of a multisubunit complex that groups tRNA ligases for Arg (RARS1), Asp (DARS1), Gln (QARS1), Ile (IARS1), Leu (LARS1), Lys (KARS1), Met (MARS1) the bifunctional ligase for Glu and Pro (EPRS1) and the auxiliary subunits AIMP1/p43, AIMP2/p38 and EEF1E1/p18. Interacts with RARS1. Part of a complex composed of RARS1, QARS1 and AIMP1.

It is found in the cytoplasm. The protein localises to the cytosol. The enzyme catalyses tRNA(Gln) + L-glutamine + ATP = L-glutaminyl-tRNA(Gln) + AMP + diphosphate. In terms of biological role, glutamine--tRNA ligase. Plays a critical role in brain development. In Bos taurus (Bovine), this protein is Glutamine--tRNA ligase (QARS1).